A 187-amino-acid polypeptide reads, in one-letter code: Elongation factor P (187 aa).

Belongs to the elongation factor P family.

It is found in the cytoplasm. It participates in protein biosynthesis; polypeptide chain elongation. Functionally, involved in peptide bond synthesis. Stimulates efficient translation and peptide-bond synthesis on native or reconstituted 70S ribosomes in vitro. Probably functions indirectly by altering the affinity of the ribosome for aminoacyl-tRNA, thus increasing their reactivity as acceptors for peptidyl transferase. The protein is Elongation factor P of Rhodococcus erythropolis (strain PR4 / NBRC 100887).